A 163-amino-acid polypeptide reads, in one-letter code: Probable RNA-binding protein EIF1AD (163 aa).

Residues 18–96 (MMEDDYELPT…VKAEISKILT (79 aa)) form the S1-like domain. The tract at residues 106–163 (AGIWPERFAKNPPQEAKAQNDDEDSDFEDDLTPNTNRPVQESDEEDEDTDTESSDEED) is disordered. 2 stretches are compositionally biased toward acidic residues: residues 126–136 (DDEDSDFEDDL) and 146–163 (ESDEEDEDTDTESSDEED).

This sequence belongs to the EIF1AD family.

This Drosophila pseudoobscura pseudoobscura (Fruit fly) protein is Probable RNA-binding protein EIF1AD.